A 205-amino-acid chain; its full sequence is Pyrrolidone-carboxylate peptidase (205 aa).

Active-site residues include glutamate 79, cysteine 142, and histidine 165.

Belongs to the peptidase C15 family. In terms of assembly, homotetramer.

The protein localises to the cytoplasm. It carries out the reaction Release of an N-terminal pyroglutamyl group from a polypeptide, the second amino acid generally not being Pro.. Functionally, removes 5-oxoproline from various penultimate amino acid residues except L-proline. This is Pyrrolidone-carboxylate peptidase from Gloeobacter violaceus (strain ATCC 29082 / PCC 7421).